Consider the following 167-residue polypeptide: Ubiquitin-fold modifier-conjugating enzyme 1 (167 aa).

The active-site Glycyl thioester intermediate is the C116. K122 is covalently cross-linked (Glycyl lysine isopeptide (Lys-Gly) (interchain with G-Cter in UFM1)).

It belongs to the ubiquitin-conjugating enzyme family. UFC1 subfamily. In terms of assembly, interacts with UBA5 (via C-terminus). Interacts with UFL1. Interacts with UFM1. Interacts with KIRREL3. Ufmylated at Lys-122. Deufmylated by UFSP1.

E2-like enzyme which specifically catalyzes the second step in ufmylation. Accepts the ubiquitin-like modifier UFM1 from the E1 enzyme UBA5 and forms an intermediate with UFM1 via a thioester linkage. Ufmylation is involved in various processes, such as ribosome recycling, response to DNA damage, interferon response or reticulophagy (also called ER-phagy). The chain is Ubiquitin-fold modifier-conjugating enzyme 1 from Rattus norvegicus (Rat).